Consider the following 527-residue polypeptide: Probable feruloyl esterase B (527 aa).

Residues 1–19 form the signal peptide; sequence MALLRHLLPVLTVGSAVQS. Disulfide bonds link Cys31-Cys76 and Cys65-Cys115. N-linked (GlcNAc...) asparagine glycosylation is found at Asn56, Asn86, and Asn139. Disulfide bonds link Cys188/Cys442, Cys257/Cys274, Cys283/Cys292, and Cys504/Cys526. Catalysis depends on Ser189, which acts as the Acyl-ester intermediate. Ca(2+)-binding residues include Asp258, Asp261, Ala263, Asp265, and Ile267. Asn277 is a glycosylation site (N-linked (GlcNAc...) asparagine). N-linked (GlcNAc...) asparagine glycosylation is found at Asn312 and Asn356. Residues Asp401 and His441 each act as charge relay system in the active site.

This sequence belongs to the tannase family.

It is found in the secreted. It catalyses the reaction feruloyl-polysaccharide + H2O = ferulate + polysaccharide.. Functionally, involved in degradation of plant cell walls. Hydrolyzes the feruloyl-arabinose ester bond in arabinoxylans as well as the feruloyl-galactose and feruloyl-arabinose ester bonds in pectin. The polypeptide is Probable feruloyl esterase B (faeB) (Emericella nidulans (strain FGSC A4 / ATCC 38163 / CBS 112.46 / NRRL 194 / M139) (Aspergillus nidulans)).